The primary structure comprises 313 residues: MMLFGCRRSLWCALSFLGAAAGYRVGSAYLGTSVLQNQTPFELRNSKVVTQCTMKVELIPALTDNYMYLLIDEESKEAAIVDPVQPQKVVDAVKKHGVKLTTVLTTHHHWDHAGGNEKLVKMVSGLKVYGGDSRIGALTQKVSHLTTFQVGSLHVKCLYTPCHTSGHICYYVTKPNSTEPPAVFTGDTLFVAGCGKFFEGTPEEMYAALIEVLGRLPPETRVYCGHEYTINNLKFARHVEPCNDAIKQKLAWAKETYNSGEPTIPSTLAEEFTFNPFMRVREKSVQEHAGERDPISTMGAIRKEKDHFKVPKD.

Zn(2+)-binding residues include His-107, His-109, Asp-111, His-112, His-163, and Asp-187. Residues 196–198 (KFF) and 226–228 (HEY) each bind substrate. His-226 lines the Zn(2+) pocket. Composition is skewed to basic and acidic residues over residues 285–294 (VQEHAGERDP) and 301–313 (IRKE…VPKD). Positions 285-313 (VQEHAGERDPISTMGAIRKEKDHFKVPKD) are disordered. 302-305 (RKEK) provides a ligand contact to substrate.

The protein belongs to the metallo-beta-lactamase superfamily. Glyoxalase II family. In terms of assembly, monomer. The cofactor is Zn(2+).

It localises to the mitochondrion matrix. It is found in the cytoplasm. The enzyme catalyses an S-(2-hydroxyacyl)glutathione + H2O = a 2-hydroxy carboxylate + glutathione + H(+). It carries out the reaction (R)-S-lactoylglutathione + H2O = (R)-lactate + glutathione + H(+). Functionally, thiolesterase that catalyzes the hydrolysis of S-D-lactoyl-glutathione to form glutathione and D-lactic acid. The protein is Hydroxyacylglutathione hydrolase, mitochondrial (hagh) of Xenopus tropicalis (Western clawed frog).